We begin with the raw amino-acid sequence, 71 residues long: Small ribosomal subunit protein bS21 (71 aa).

A compositionally biased stretch (basic residues) spans 48-59; the sequence is KAAAAVKRHAKK. The disordered stretch occupies residues 48–71; that stretch reads KAAAAVKRHAKKVQRENRKFQRLY. Residues 60 to 71 show a composition bias toward basic and acidic residues; the sequence is VQRENRKFQRLY.

The protein belongs to the bacterial ribosomal protein bS21 family.

This chain is Small ribosomal subunit protein bS21, found in Teredinibacter turnerae (strain ATCC 39867 / T7901).